We begin with the raw amino-acid sequence, 296 residues long: GTPase Era (296 aa).

One can recognise an Era-type G domain in the interval 3-170 (KSGFVTIVGR…KELMFKYIPE (168 aa)). The interval 11 to 18 (GRPNVGKS) is G1. 11–18 (GRPNVGKS) serves as a coordination point for GTP. The G2 stretch occupies residues 37–41 (QTTRN). Residues 58–61 (DTPG) form a G3 region. GTP is bound by residues 58–62 (DTPGI) and 120–123 (NKID). A G4 region spans residues 120-123 (NKID). The segment at 149 to 151 (ISA) is G5. In terms of domain architecture, KH type-2 spans 201–278 (LSEEVPHGIA…YIRLWVKVKE (78 aa)).

The protein belongs to the TRAFAC class TrmE-Era-EngA-EngB-Septin-like GTPase superfamily. Era GTPase family. As to quaternary structure, monomer.

Its subcellular location is the cytoplasm. It is found in the cell membrane. Its function is as follows. An essential GTPase that binds both GDP and GTP, with rapid nucleotide exchange. Plays a role in 16S rRNA processing and 30S ribosomal subunit biogenesis and possibly also in cell cycle regulation and energy metabolism. This is GTPase Era from Clostridium botulinum (strain Langeland / NCTC 10281 / Type F).